The primary structure comprises 302 residues: Aspartate carbamoyltransferase catalytic subunit (302 aa).

Carbamoyl phosphate contacts are provided by arginine 53 and threonine 54. Position 82 (lysine 82) interacts with L-aspartate. Residues arginine 103, histidine 131, and glutamine 134 each contribute to the carbamoyl phosphate site. L-aspartate is bound by residues arginine 164 and arginine 223. Carbamoyl phosphate-binding residues include leucine 260 and proline 261.

This sequence belongs to the aspartate/ornithine carbamoyltransferase superfamily. ATCase family. In terms of assembly, heterooligomer of catalytic and regulatory chains.

The catalysed reaction is carbamoyl phosphate + L-aspartate = N-carbamoyl-L-aspartate + phosphate + H(+). It functions in the pathway pyrimidine metabolism; UMP biosynthesis via de novo pathway; (S)-dihydroorotate from bicarbonate: step 2/3. In terms of biological role, catalyzes the condensation of carbamoyl phosphate and aspartate to form carbamoyl aspartate and inorganic phosphate, the committed step in the de novo pyrimidine nucleotide biosynthesis pathway. This is Aspartate carbamoyltransferase catalytic subunit from Methanococcus maripaludis (strain C6 / ATCC BAA-1332).